Consider the following 106-residue polypeptide: DNA-directed RNA polymerase subunit omega (106 aa).

A disordered region spans residues 76-106 (REPAREAAEPAGEAPEEQQRAAGEREDQGAA). Residues 92 to 106 (EQQRAAGEREDQGAA) show a composition bias toward basic and acidic residues.

This sequence belongs to the RNA polymerase subunit omega family. As to quaternary structure, the RNAP catalytic core consists of 2 alpha, 1 beta, 1 beta' and 1 omega subunit. When a sigma factor is associated with the core the holoenzyme is formed, which can initiate transcription.

The enzyme catalyses RNA(n) + a ribonucleoside 5'-triphosphate = RNA(n+1) + diphosphate. Its function is as follows. Promotes RNA polymerase assembly. Latches the N- and C-terminal regions of the beta' subunit thereby facilitating its interaction with the beta and alpha subunits. This is DNA-directed RNA polymerase subunit omega from Rubrobacter xylanophilus (strain DSM 9941 / JCM 11954 / NBRC 16129 / PRD-1).